Consider the following 370-residue polypeptide: UDP-N-acetylglucosamine--N-acetylmuramyl-(pentapeptide) pyrophosphoryl-undecaprenol N-acetylglucosamine transferase (370 aa).

UDP-N-acetyl-alpha-D-glucosamine-binding positions include 10-12 (TGG), Asn-126, Ser-200, Ile-255, and Gln-300.

The protein belongs to the glycosyltransferase 28 family. MurG subfamily.

It localises to the cell membrane. It carries out the reaction Mur2Ac(oyl-L-Ala-gamma-D-Glu-L-Lys-D-Ala-D-Ala)-di-trans,octa-cis-undecaprenyl diphosphate + UDP-N-acetyl-alpha-D-glucosamine = beta-D-GlcNAc-(1-&gt;4)-Mur2Ac(oyl-L-Ala-gamma-D-Glu-L-Lys-D-Ala-D-Ala)-di-trans,octa-cis-undecaprenyl diphosphate + UDP + H(+). It participates in cell wall biogenesis; peptidoglycan biosynthesis. Functionally, cell wall formation. Catalyzes the transfer of a GlcNAc subunit on undecaprenyl-pyrophosphoryl-MurNAc-pentapeptide (lipid intermediate I) to form undecaprenyl-pyrophosphoryl-MurNAc-(pentapeptide)GlcNAc (lipid intermediate II). This chain is UDP-N-acetylglucosamine--N-acetylmuramyl-(pentapeptide) pyrophosphoryl-undecaprenol N-acetylglucosamine transferase, found in Lactobacillus gasseri (strain ATCC 33323 / DSM 20243 / BCRC 14619 / CIP 102991 / JCM 1131 / KCTC 3163 / NCIMB 11718 / NCTC 13722 / AM63).